The primary structure comprises 484 residues: Aspartyl/glutamyl-tRNA(Asn/Gln) amidotransferase subunit B (484 aa).

Belongs to the GatB/GatE family. GatB subfamily. As to quaternary structure, heterotrimer of A, B and C subunits.

The catalysed reaction is L-glutamyl-tRNA(Gln) + L-glutamine + ATP + H2O = L-glutaminyl-tRNA(Gln) + L-glutamate + ADP + phosphate + H(+). It carries out the reaction L-aspartyl-tRNA(Asn) + L-glutamine + ATP + H2O = L-asparaginyl-tRNA(Asn) + L-glutamate + ADP + phosphate + 2 H(+). Functionally, allows the formation of correctly charged Asn-tRNA(Asn) or Gln-tRNA(Gln) through the transamidation of misacylated Asp-tRNA(Asn) or Glu-tRNA(Gln) in organisms which lack either or both of asparaginyl-tRNA or glutaminyl-tRNA synthetases. The reaction takes place in the presence of glutamine and ATP through an activated phospho-Asp-tRNA(Asn) or phospho-Glu-tRNA(Gln). This Bordetella parapertussis (strain 12822 / ATCC BAA-587 / NCTC 13253) protein is Aspartyl/glutamyl-tRNA(Asn/Gln) amidotransferase subunit B.